Here is a 63-residue protein sequence, read N- to C-terminus: MNFSRILFFVFTCFVALASVSGAPEPRWKFFKKIERVGQNVRDGLIKAGPAIQVLGAAKALGK.

An N-terminal signal peptide occupies residues 1-22 (MNFSRILFFVFTCFVALASVSG). The propeptide at 23–26 (APEP) is removed by a dipeptidylpeptidase. Leucine 61 carries the leucine amide modification.

Belongs to the cecropin family.

The protein localises to the secreted. Its function is as follows. Has antibacterial activity. This chain is Hyphancin-3E, found in Hyphantria cunea (Fall webworm moth).